Here is a 248-residue protein sequence, read N- to C-terminus: 2,3-bisphosphoglycerate-dependent phosphoglycerate mutase (248 aa).

Residues Arg-8–Asn-15, Thr-21–Gly-22, Arg-60, Glu-87–Tyr-90, Lys-98, Arg-114–Arg-115, and Gly-183–Asn-184 each bind substrate. His-9 functions as the Tele-phosphohistidine intermediate in the catalytic mechanism. The active-site Proton donor/acceptor is the Glu-87.

Belongs to the phosphoglycerate mutase family. BPG-dependent PGAM subfamily.

The catalysed reaction is (2R)-2-phosphoglycerate = (2R)-3-phosphoglycerate. Its pathway is carbohydrate degradation; glycolysis; pyruvate from D-glyceraldehyde 3-phosphate: step 3/5. Functionally, catalyzes the interconversion of 2-phosphoglycerate and 3-phosphoglycerate. The polypeptide is 2,3-bisphosphoglycerate-dependent phosphoglycerate mutase (Methanospirillum hungatei JF-1 (strain ATCC 27890 / DSM 864 / NBRC 100397 / JF-1)).